We begin with the raw amino-acid sequence, 221 residues long: Phosphoribosylformylglycinamidine synthase subunit PurQ (221 aa).

A Glutamine amidotransferase type-1 domain is found at 5–221 (TVGIVVFPGS…LYTLRSLITQ (217 aa)). Catalysis depends on C89, which acts as the Nucleophile. Residues H197 and E199 contribute to the active site.

Part of the FGAM synthase complex composed of 1 PurL, 1 PurQ and 2 PurS subunits.

The protein resides in the cytoplasm. The enzyme catalyses N(2)-formyl-N(1)-(5-phospho-beta-D-ribosyl)glycinamide + L-glutamine + ATP + H2O = 2-formamido-N(1)-(5-O-phospho-beta-D-ribosyl)acetamidine + L-glutamate + ADP + phosphate + H(+). The catalysed reaction is L-glutamine + H2O = L-glutamate + NH4(+). Its pathway is purine metabolism; IMP biosynthesis via de novo pathway; 5-amino-1-(5-phospho-D-ribosyl)imidazole from N(2)-formyl-N(1)-(5-phospho-D-ribosyl)glycinamide: step 1/2. In terms of biological role, part of the phosphoribosylformylglycinamidine synthase complex involved in the purines biosynthetic pathway. Catalyzes the ATP-dependent conversion of formylglycinamide ribonucleotide (FGAR) and glutamine to yield formylglycinamidine ribonucleotide (FGAM) and glutamate. The FGAM synthase complex is composed of three subunits. PurQ produces an ammonia molecule by converting glutamine to glutamate. PurL transfers the ammonia molecule to FGAR to form FGAM in an ATP-dependent manner. PurS interacts with PurQ and PurL and is thought to assist in the transfer of the ammonia molecule from PurQ to PurL. In Prochlorococcus marinus subsp. pastoris (strain CCMP1986 / NIES-2087 / MED4), this protein is Phosphoribosylformylglycinamidine synthase subunit PurQ.